Here is a 330-residue protein sequence, read N- to C-terminus: GTPase Obg (330 aa).

Positions 1–159 constitute an Obg domain; the sequence is MNFIDEVKIC…MWIHLSLKLL (159 aa). One can recognise an OBG-type G domain in the interval 160–327; it reads SDVGLVGLPN…IVKLALKTIK (168 aa). Residues 166–173, 191–195, 212–215, 279–282, and 308–310 contribute to the GTP site; these read GLPNAGKS, FTTLV, DIPG, NKCD, and STY. Mg(2+) is bound by residues Ser173 and Thr193.

The protein belongs to the TRAFAC class OBG-HflX-like GTPase superfamily. OBG GTPase family. In terms of assembly, monomer. The cofactor is Mg(2+).

It is found in the cytoplasm. An essential GTPase which binds GTP, GDP and possibly (p)ppGpp with moderate affinity, with high nucleotide exchange rates and a fairly low GTP hydrolysis rate. Plays a role in control of the cell cycle, stress response, ribosome biogenesis and in those bacteria that undergo differentiation, in morphogenesis control. This chain is GTPase Obg, found in Rickettsia felis (strain ATCC VR-1525 / URRWXCal2) (Rickettsia azadi).